The following is a 126-amino-acid chain: uncharacterized protein (126 aa).

The chain crosses the membrane as a helical span at residues 3-23 (NMIVLIIFAAFIIYMIASYVY). In terms of domain architecture, Rhodanese spans 39-123 (GYRKAQLIDV…GFKKWGGKIK (85 aa)).

The protein resides in the cell membrane. This is an uncharacterized protein from Bacillus subtilis (strain 168).